Here is a 128-residue protein sequence, read N- to C-terminus: Large ribosomal subunit protein bL17 (128 aa).

This sequence belongs to the bacterial ribosomal protein bL17 family. Part of the 50S ribosomal subunit. Contacts protein L32.

This Pseudomonas syringae pv. syringae (strain B728a) protein is Large ribosomal subunit protein bL17.